Consider the following 176-residue polypeptide: NAD(P)H-quinone oxidoreductase subunit 6, chloroplastic (176 aa).

A run of 5 helical transmembrane segments spans residues 10–30 (FLLVFLGSGLILGGLGVVLLT), 32–52 (PIYSAFSLGLVFVCISLFYIP), 61–81 (AQLLIYVGAINVLIIFAVMFM), 93–115 (WTVGDGVTSVVCTSIFASLITTI), and 152–172 (FFLPFELISIILLVALIGAIA).

This sequence belongs to the complex I subunit 6 family. As to quaternary structure, NDH is composed of at least 16 different subunits, 5 of which are encoded in the nucleus.

Its subcellular location is the plastid. It is found in the chloroplast thylakoid membrane. The enzyme catalyses a plastoquinone + NADH + (n+1) H(+)(in) = a plastoquinol + NAD(+) + n H(+)(out). The catalysed reaction is a plastoquinone + NADPH + (n+1) H(+)(in) = a plastoquinol + NADP(+) + n H(+)(out). In terms of biological role, NDH shuttles electrons from NAD(P)H:plastoquinone, via FMN and iron-sulfur (Fe-S) centers, to quinones in the photosynthetic chain and possibly in a chloroplast respiratory chain. The immediate electron acceptor for the enzyme in this species is believed to be plastoquinone. Couples the redox reaction to proton translocation, and thus conserves the redox energy in a proton gradient. The protein is NAD(P)H-quinone oxidoreductase subunit 6, chloroplastic (ndhG) of Vitis vinifera (Grape).